Here is a 202-residue protein sequence, read N- to C-terminus: Small ribosomal subunit protein uS4 (202 aa).

The S4 RNA-binding domain maps to 91–168 (SMLSSVLYNS…QKVPDYLEVD (78 aa)).

The protein belongs to the universal ribosomal protein uS4 family. In terms of assembly, part of the 30S ribosomal subunit. Contacts protein S5. The interaction surface between S4 and S5 is involved in control of translational fidelity.

Functionally, one of the primary rRNA binding proteins, it binds directly to 16S rRNA where it nucleates assembly of the body of the 30S subunit. With S5 and S12 plays an important role in translational accuracy. This chain is Small ribosomal subunit protein uS4, found in Ehrlichia ruminantium (strain Welgevonden).